The sequence spans 193 residues: UPF0314 protein Pden_1914 (193 aa).

Transmembrane regions (helical) follow at residues alanine 13–glycine 33, tryptophan 62–alanine 82, leucine 148–isoleucine 168, and leucine 172–alanine 192.

Belongs to the UPF0314 family.

The protein resides in the cell membrane. This is UPF0314 protein Pden_1914 from Paracoccus denitrificans (strain Pd 1222).